A 246-amino-acid chain; its full sequence is Type III pantothenate kinase (246 aa).

6-13 is a binding site for ATP; the sequence is DVGNSRIK. Substrate contacts are provided by residues Tyr-93 and 100–103; that span reads GSDR. Residue Asp-102 is the Proton acceptor of the active site. Thr-125 provides a ligand contact to ATP. Thr-175 contacts substrate.

It belongs to the type III pantothenate kinase family. In terms of assembly, homodimer. Requires NH4(+) as cofactor. K(+) is required as a cofactor.

It localises to the cytoplasm. The catalysed reaction is (R)-pantothenate + ATP = (R)-4'-phosphopantothenate + ADP + H(+). The protein operates within cofactor biosynthesis; coenzyme A biosynthesis; CoA from (R)-pantothenate: step 1/5. Its function is as follows. Catalyzes the phosphorylation of pantothenate (Pan), the first step in CoA biosynthesis. This is Type III pantothenate kinase from Dichelobacter nodosus (strain VCS1703A).